A 767-amino-acid chain; its full sequence is Photosystem I P700 chlorophyll a apoprotein A1 (767 aa).

A disordered region spans residues 1–22 (MTISPPESGEKDKKILESPVKA). Basic and acidic residues predominate over residues 8 to 22 (SGEKDKKILESPVKA). 8 consecutive transmembrane segments (helical) span residues 76-99 (IFSA…FHGA), 162-185 (LMAL…FHYH), 201-225 (LNHH…HIGA), 309-327 (VSHH…GHMY), 368-391 (RHAQ…HHMY), 407-433 (LGLF…IAMV), 455-477 (ALIS…LYIH), and 558-576 (LMIH…LILL). Positions 600 and 609 each coordinate [4Fe-4S] cluster. 2 helical membrane-spanning segments follow: residues 616 to 637 (HVFL…HFSW) and 681 to 703 (ISMY…MFLF). H692 is a divinylchlorophyll a' binding site. Residues M700 and Y708 each contribute to the divinyl chlorophyll a site. W709 contributes to the phylloquinone binding site. A helical membrane pass occupies residues 741–761 (AVGVTHFLVGGIATTWAFFHA).

It belongs to the PsaA/PsaB family. The PsaA/B heterodimer binds the P700 divinyl chlorophyll special pair and subsequent electron acceptors. PSI consists of a core antenna complex that captures photons, and an electron transfer chain that converts photonic excitation into a charge separation. The cyanobacterial PSI reaction center is composed of one copy each of PsaA,B,C,D,E,F,I,J,K,L,M and X, and forms trimeric complexes. PSI electron transfer chain: 5 divinyl chlorophyll a, 1 divinyl chlorophyll a', 2 phylloquinones and 3 4Fe-4S clusters. PSI core antenna: 90 divinyl chlorophyll a, 22 carotenoids, 3 phospholipids and 1 galactolipid. P700 is a divinyl chlorophyll a/divinyl chlorophyll a' dimer, A0 is one or more divinyl chlorophyll a, A1 is one or both phylloquinones and FX is a shared 4Fe-4S iron-sulfur center. serves as cofactor.

The protein localises to the cellular thylakoid membrane. The enzyme catalyses reduced [plastocyanin] + hnu + oxidized [2Fe-2S]-[ferredoxin] = oxidized [plastocyanin] + reduced [2Fe-2S]-[ferredoxin]. PsaA and PsaB bind P700, the primary electron donor of photosystem I (PSI), as well as the electron acceptors A0, A1 and FX. PSI is a plastocyanin/cytochrome c6-ferredoxin oxidoreductase, converting photonic excitation into a charge separation, which transfers an electron from the donor P700 chlorophyll pair to the spectroscopically characterized acceptors A0, A1, FX, FA and FB in turn. Oxidized P700 is reduced on the lumenal side of the thylakoid membrane by plastocyanin or cytochrome c6. This is Photosystem I P700 chlorophyll a apoprotein A1 from Prochlorococcus marinus subsp. pastoris (strain CCMP1986 / NIES-2087 / MED4).